The primary structure comprises 162 residues: MPDENKQPLFQIQRVYLKGLSLEQPNSPAIFLEEQSPTLEVAVSTIAEQQADGIFESTVTVSVTAKIRDKVAFLVEAKQSGIFEIRHLPAEQLNPALGIGCPTILYPYLRANIADAITRAGFPPVHLSEINFQAFYLQQQKNKMATQPGQTAEEPAMALEQE.

Belongs to the SecB family. As to quaternary structure, homotetramer, a dimer of dimers. One homotetramer interacts with 1 SecA dimer.

It localises to the cytoplasm. Its function is as follows. One of the proteins required for the normal export of preproteins out of the cell cytoplasm. It is a molecular chaperone that binds to a subset of precursor proteins, maintaining them in a translocation-competent state. It also specifically binds to its receptor SecA. The chain is Protein-export protein SecB 2 from Polaromonas naphthalenivorans (strain CJ2).